A 185-amino-acid chain; its full sequence is Ribosome-recycling factor (185 aa).

Belongs to the RRF family.

The protein resides in the cytoplasm. Responsible for the release of ribosomes from messenger RNA at the termination of protein biosynthesis. May increase the efficiency of translation by recycling ribosomes from one round of translation to another. This is Ribosome-recycling factor from Dehalococcoides mccartyi (strain CBDB1).